Consider the following 105-residue polypeptide: Large ribosomal subunit protein uL24 (105 aa).

The protein belongs to the universal ribosomal protein uL24 family. As to quaternary structure, part of the 50S ribosomal subunit.

Functionally, one of two assembly initiator proteins, it binds directly to the 5'-end of the 23S rRNA, where it nucleates assembly of the 50S subunit. One of the proteins that surrounds the polypeptide exit tunnel on the outside of the subunit. The sequence is that of Large ribosomal subunit protein uL24 from Aromatoleum aromaticum (strain DSM 19018 / LMG 30748 / EbN1) (Azoarcus sp. (strain EbN1)).